Here is a 559-residue protein sequence, read N- to C-terminus: Cellulose biosynthesis protein BcsG (559 aa).

A run of 4 helical transmembrane segments spans residues Leu-34–Leu-54, His-68–Pro-88, Phe-113–Ser-133, and Ile-138–Ser-158.

Its subcellular location is the cell inner membrane. The protein is Cellulose biosynthesis protein BcsG (bcsG) of Escherichia coli (strain K12).